The primary structure comprises 336 residues: Uridine nucleosidase 1 (336 aa).

Catalysis depends on residues D29 and H260.

It belongs to the IUNH family. In terms of assembly, homodimer. Component of the NSH heterocomplex made of URH1/NSH1 and URH2/NSH2 which exhibits strong xanthosine nucleosidase activity. Interacts with URH2. In terms of tissue distribution, expressed ubiquitously in leaves, flowers, stems, pollen cells, root tip meristem and root vasculature.

The protein localises to the cytoplasm. The catalysed reaction is uridine + H2O = D-ribose + uracil. The enzyme catalyses xanthosine + H2O = D-ribose + xanthine. It catalyses the reaction inosine + H2O = hypoxanthine + D-ribose. It carries out the reaction adenosine + H2O = D-ribose + adenine. In terms of biological role, involved in purine and pyrimidine breakdown rather than in pyrimidine salvage, especially in response to dark stress. Together with URH2, required for efficient inosine and xanthosine hydrolytic activities. Unable to use cytidine as a substrate. Can use uridine, inosine, adenosine as well as the cytokinin derivative isopentenyladenine-riboside as substrates. Also hydrolyzes xanthosine with high efficiency. This Arabidopsis thaliana (Mouse-ear cress) protein is Uridine nucleosidase 1.